A 236-amino-acid polypeptide reads, in one-letter code: Phosphoribosylaminoimidazole-succinocarboxamide synthase (236 aa).

This sequence belongs to the SAICAR synthetase family.

The catalysed reaction is 5-amino-1-(5-phospho-D-ribosyl)imidazole-4-carboxylate + L-aspartate + ATP = (2S)-2-[5-amino-1-(5-phospho-beta-D-ribosyl)imidazole-4-carboxamido]succinate + ADP + phosphate + 2 H(+). The protein operates within purine metabolism; IMP biosynthesis via de novo pathway; 5-amino-1-(5-phospho-D-ribosyl)imidazole-4-carboxamide from 5-amino-1-(5-phospho-D-ribosyl)imidazole-4-carboxylate: step 1/2. This chain is Phosphoribosylaminoimidazole-succinocarboxamide synthase, found in Rickettsia typhi (strain ATCC VR-144 / Wilmington).